Consider the following 449-residue polypeptide: Tubulin alpha-B chain (449 aa).

8 residues coordinate GTP: Gln-11, Glu-71, Ser-140, Gly-144, Thr-145, Thr-179, Asn-206, and Asn-228. Glu-71 contributes to the Mg(2+) binding site. The active site involves Glu-254.

This sequence belongs to the tubulin family. Dimer of alpha and beta chains. A typical microtubule is a hollow water-filled tube with an outer diameter of 25 nm and an inner diameter of 15 nM. Alpha-beta heterodimers associate head-to-tail to form protofilaments running lengthwise along the microtubule wall with the beta-tubulin subunit facing the microtubule plus end conferring a structural polarity. Microtubules usually have 13 protofilaments but different protofilament numbers can be found in some organisms and specialized cells. The cofactor is Mg(2+).

Its subcellular location is the cytoplasm. The protein localises to the cytoskeleton. The enzyme catalyses GTP + H2O = GDP + phosphate + H(+). Functionally, tubulin is the major constituent of microtubules, a cylinder consisting of laterally associated linear protofilaments composed of alpha- and beta-tubulin heterodimers. Microtubules grow by the addition of GTP-tubulin dimers to the microtubule end, where a stabilizing cap forms. Below the cap, tubulin dimers are in GDP-bound state, owing to GTPase activity of alpha-tubulin. The chain is Tubulin alpha-B chain (tba-2) from Neurospora crassa (strain ATCC 24698 / 74-OR23-1A / CBS 708.71 / DSM 1257 / FGSC 987).